The following is a 269-amino-acid chain: Eukaryotic translation initiation factor 3 subunit G-1 (269 aa).

In terms of domain architecture, RRM spans 188-266; that stretch reads AAIRISNLSE…LILSVEWSKP (79 aa).

Belongs to the eIF-3 subunit G family. In terms of assembly, component of the eukaryotic translation initiation factor 3 (eIF-3) complex. The eIF-3 complex interacts with pix.

Its subcellular location is the cytoplasm. RNA-binding component of the eukaryotic translation initiation factor 3 (eIF-3) complex, which is involved in protein synthesis of a specialized repertoire of mRNAs and, together with other initiation factors, stimulates binding of mRNA and methionyl-tRNAi to the 40S ribosome. The eIF-3 complex specifically targets and initiates translation of a subset of mRNAs involved in cell proliferation. This subunit can bind 18S rRNA. This Drosophila erecta (Fruit fly) protein is Eukaryotic translation initiation factor 3 subunit G-1.